A 448-amino-acid polypeptide reads, in one-letter code: MDASTSNQAVVFSTQTPYPLPSQKYMIPTTWRRYHLSQLVNKALGLAKPVPFDFLVKGEILRTTIAEWCAENGVGEEETLEIEYIESVLPPQRLSEFPHESWVSAVSCSLPTHFLTTAYDGHLRAFDLSKNVTLDAALHSAPITSFSVISSTVDTYKLATSSLDLTAQISEITLGEPQSSSSNKVLASLHLHTAPVSSIAANPSGTQLLTSSWDSLIGVWDTTIPPKHEVPEPTITAADQRTKKRRKVDPSSGDSSSPTAIRKAPLTVLKSHIGRVSKVAWLSPTQGVSCGFDSTLRTWDVERGLCTRTISASEKPFLDLAVNVENQTALTVSTDRTMTLYDLRTEEALSAAAGSFLHPATPSCVATTPESSYQVVTGAYDGVVRVWDTRSTKAAISSFKAWDGTKKVLAVDWKRGVIGIGGEGGLDVWKVGLENETQGLSKESQRSA.

Residues 5-86 (TSNQAVVFST…EETLEIEYIE (82 aa)) form a ubiquitin-like (UBL) domain region. WD repeat units follow at residues 98–136 (PHESWVSAVSCSLPTHFLTTAYDGHLRAFDLSKNVTLDA), 191–230 (LHTAPVSSIAANPSGTQLLTSSWDSLIGVWDTTIPPKHEV), 271–309 (SHIGRVSKVAWLSPTQGVSCGFDSTLRTWDVERGLCTRT), 312–351 (ASEKPFLDLAVNVENQTALTVSTDRTMTLYDLRTEEALSA), 357–397 (LHPA…AAIS), and 403–439 (DGTKKVLAVDWKRGVIGIGGEGGLDVWKVGLENETQG). Positions 225–261 (PPKHEVPEPTITAADQRTKKRRKVDPSSGDSSSPTAI) are disordered.

Belongs to the WD repeat WDR12/YTM1 family. Component of the NOP7 complex, composed of ERB1, NOP7 and YTM1. The complex is held together by ERB1, which interacts with NOP7 via its N-terminal domain and with YTM1 via a high-affinity interaction between the seven-bladed beta-propeller domains of the 2 proteins. The NOP7 complex associates with the 66S pre-ribosome. Interacts (via UBL domain) with MDN1 (via VWFA/MIDAS domain).

It localises to the nucleus. It is found in the nucleolus. Its subcellular location is the nucleoplasm. Component of the NOP7 complex, which is required for maturation of the 25S and 5.8S ribosomal RNAs and formation of the 60S ribosome. The protein is Ribosome biogenesis protein YTM1 of Coprinopsis cinerea (strain Okayama-7 / 130 / ATCC MYA-4618 / FGSC 9003) (Inky cap fungus).